The sequence spans 208 residues: Small ribosomal subunit protein uS4 (208 aa).

The segment at 24-52 (GVKPFDVKTKKANKAPGQHGQARGGKQSE) is disordered. An S4 RNA-binding domain is found at 98–160 (SRLDNVVYRM…AKQQLRIKNA (63 aa)).

The protein belongs to the universal ribosomal protein uS4 family. As to quaternary structure, part of the 30S ribosomal subunit. Contacts protein S5. The interaction surface between S4 and S5 is involved in control of translational fidelity.

In terms of biological role, one of the primary rRNA binding proteins, it binds directly to 16S rRNA where it nucleates assembly of the body of the 30S subunit. Its function is as follows. With S5 and S12 plays an important role in translational accuracy. The sequence is that of Small ribosomal subunit protein uS4 from Acinetobacter baumannii (strain ATCC 17978 / DSM 105126 / CIP 53.77 / LMG 1025 / NCDC KC755 / 5377).